Here is an 882-residue protein sequence, read N- to C-terminus: MQTKYDFKKVEHQRYQQWLEKKYFCANPNANKKTFTVVIPPPNVTGKLHLGHAWNNTIQDIIIRFKKMQGFDVLFLPGMDHAGIATQNKVKEQLKQEGLLTKTLSKEIFLKYAWQWKEEHAQNIRQQWQVLGLHLDYNFEKFTLDPDLSQQVQEVFGKLFQKKLIYRDYKIINWDPETKTALSNVEVNYHETEGKLYYIKYFLVDFPTNSNLSDASLVPSFLEIATTRPETMFADQALMVNPNDPRYQSFIGKKVFIPDTNIQIPVISDNYVDINFGTGVVKVTPGHDINDFEVAKRHQLKALLCMNEDGTMNDLALQYQGLDRFVCRQKLVQTLKQKGFFTKTENHLHKVGYSSISDAIIEPRLSLQWVLKTKAIAQIALKTNKINFFPLRFENIFNNWLQNIEDWCISRQLWWGHQIPAWHKGQEIKVQIESPGPEWSLDCDVLDTWFSSALWPFSTLGWPNCNAPLFQNRFPTDVLVTGYDILTFWVSKMVFQSILLTHKDPFKDVLLHGLVRDNKGQKMSKSKGNGVDPLEVVAKYGTDALRWFLTTNAAPGFDLFYDETKVASSWNFINKLWNISRFVKLNTSTLDTDFDINLLTLTQKALLTQLHLTTQKVTTLYQKYELKEIGKILYHFVWEDFANWHLEFAKHDLDQNNSNLTNLHNSQKFLVYMMKHILQLLHPFIPFVTDALYENFDNKTNITQTTLQKTSYCNLDALADFENLKNLIIKTRHLRQESNINCKLNLELEVASQFSTILQDFVNLQQALEKFFKTLQIKITNKVTNSKKTIWLIEKNLSLYIDRKTLNELNETKFESNFLQQKNTLLKEIKRSETILNNPSFLQKAASAKIEIEKKKYESYCKQYKKLLESKNNSNPLNPNKK.

The short motif at 42-52 is the 'HIGH' region element; that stretch reads PNVTGKLHLGH. The short motif at 522-526 is the 'KMSKS' region element; it reads KMSKS. Position 525 (Lys-525) interacts with ATP. A coiled-coil region spans residues 849–873; that stretch reads KIEIEKKKYESYCKQYKKLLESKNN.

Belongs to the class-I aminoacyl-tRNA synthetase family. ValS type 1 subfamily. As to quaternary structure, monomer.

The protein resides in the cytoplasm. The catalysed reaction is tRNA(Val) + L-valine + ATP = L-valyl-tRNA(Val) + AMP + diphosphate. Catalyzes the attachment of valine to tRNA(Val). As ValRS can inadvertently accommodate and process structurally similar amino acids such as threonine, to avoid such errors, it has a 'posttransfer' editing activity that hydrolyzes mischarged Thr-tRNA(Val) in a tRNA-dependent manner. The protein is Valine--tRNA ligase of Onion yellows phytoplasma (strain OY-M).